A 42-amino-acid chain; its full sequence is Large ribosomal subunit protein eL32 (42 aa).

It belongs to the eukaryotic ribosomal protein eL32 family.

The chain is Large ribosomal subunit protein eL32 (RPL32) from Zea mays (Maize).